The sequence spans 78 residues: Ferredoxin oxidoreductase 2 subunit ForD (78 aa).

4Fe-4S ferredoxin-type domains follow at residues 3–35 (FVAD…FKAS) and 37–66 (NSAW…HCIE). C12, C17, C20, C24, C46, C49, C52, and C56 together coordinate [4Fe-4S] cluster.

Heterotetramer of one alpha, one beta, one delta and one gamma chain. Requires [4Fe-4S] cluster as cofactor.

The protein is Ferredoxin oxidoreductase 2 subunit ForD (forD2) of Aquifex aeolicus (strain VF5).